A 633-amino-acid polypeptide reads, in one-letter code: Pentatricopeptide repeat-containing protein At3g24000, mitochondrial (633 aa).

A mitochondrion-targeting transit peptide spans 1–63 (MALRFPPRLL…SYIPADRRFY (63 aa)). PPR repeat units lie at residues 94-124 (DIVM…MPQR), 125-159 (DFVT…GYSP), 160-194 (NEFT…GFDS), 195-225 (NVHV…LESR), 226-260 (NDVS…GFRP), 261-295 (SHFS…GEKL), 296-326 (VAFA…LAKR), 327-361 (DVVS…GIRP), 362-396 (NEIS…GIVP), and 397-431 (EAWH…PTAA). The segment at 432 to 507 (IWKALLNACR…EPACSWVEIE (76 aa)) is type E motif. The type E(+) motif stretch occupies residues 508–538 (NAIHMFVANDERHPQREEIARKWEEVLAKIK). Residues 539–633 (ELGYVPDTSH…DGNCSCKDYW (95 aa)) are type DYW motif.

This sequence belongs to the PPR family. PCMP-H subfamily.

The protein localises to the mitochondrion. This Arabidopsis thaliana (Mouse-ear cress) protein is Pentatricopeptide repeat-containing protein At3g24000, mitochondrial (PCMP-H87).